The following is a 170-amino-acid chain: Large ribosomal subunit protein uL10 (170 aa).

This sequence belongs to the universal ribosomal protein uL10 family. Part of the ribosomal stalk of the 50S ribosomal subunit. The N-terminus interacts with L11 and the large rRNA to form the base of the stalk. The C-terminus forms an elongated spine to which L12 dimers bind in a sequential fashion forming a multimeric L10(L12)X complex.

Functionally, forms part of the ribosomal stalk, playing a central role in the interaction of the ribosome with GTP-bound translation factors. In Fusobacterium nucleatum subsp. nucleatum (strain ATCC 25586 / DSM 15643 / BCRC 10681 / CIP 101130 / JCM 8532 / KCTC 2640 / LMG 13131 / VPI 4355), this protein is Large ribosomal subunit protein uL10.